The sequence spans 513 residues: Na(+)/H(+) antiporter NhaB (513 aa).

12 helical membrane-spanning segments follow: residues 23–43, 52–72, 97–117, 120–140, 144–164, 202–222, 238–258, 303–323, 348–368, 391–411, 447–467, and 475–495; these read LALIIFLIVNPLIFLISPFVA, IFTLAMALKCYPLLPGGLLAI, LLLMFMVAGIYFMKQLLLFIF, LLLSIRSKMLLSLSFCVAAAF, FLDALTVVAVVISVAVGFYGI, LMMHAGVGTALGGVMTMVGEP, FFLRMSPVTVPVLICGLLTCL, AIIGVWLVTALALHLAEVGLI, TESLPFTALLTVFFSVVAVII, LFYIFNGLLSSISDNVFVGTI, ATPNGQAAFLFLLTSALAPLI, and VWMALPYTLVLTLVGLLCVEF.

This sequence belongs to the NhaB Na(+)/H(+) (TC 2.A.34) antiporter family.

Its subcellular location is the cell inner membrane. It catalyses the reaction 2 Na(+)(in) + 3 H(+)(out) = 2 Na(+)(out) + 3 H(+)(in). In terms of biological role, na(+)/H(+) antiporter that extrudes sodium in exchange for external protons. The polypeptide is Na(+)/H(+) antiporter NhaB (Escherichia coli O45:K1 (strain S88 / ExPEC)).